The primary structure comprises 767 residues: Protein transport protein Sec23A (767 aa).

Zn(2+)-binding residues include C61, C66, C85, and C88. A Gelsolin-like repeat occupies 634-720 (PEPVLLDSSS…EHGGSQARFL (87 aa)).

The protein belongs to the SEC23/SEC24 family. SEC23 subfamily. As to quaternary structure, COPII is composed of at least five proteins: the Sec23/24 complex, the Sec13/31 complex and Sar1.

The protein localises to the cytoplasmic vesicle. Its subcellular location is the COPII-coated vesicle membrane. It localises to the endoplasmic reticulum membrane. It is found in the cytoplasm. The protein resides in the cytosol. Its function is as follows. Component of the coat protein complex II (COPII) which promotes the formation of transport vesicles from the endoplasmic reticulum (ER). The coat has two main functions, the physical deformation of the endoplasmic reticulum membrane into vesicles and the selection of cargo molecules for their transport to the Golgi complex. The chain is Protein transport protein Sec23A from Gallus gallus (Chicken).